A 321-amino-acid chain; its full sequence is Transaldolase (321 aa).

The Schiff-base intermediate with substrate role is filled by Lys132.

It belongs to the transaldolase family. Type 1 subfamily. In terms of assembly, homodimer.

It localises to the cytoplasm. The enzyme catalyses D-sedoheptulose 7-phosphate + D-glyceraldehyde 3-phosphate = D-erythrose 4-phosphate + beta-D-fructose 6-phosphate. Its pathway is carbohydrate degradation; pentose phosphate pathway; D-glyceraldehyde 3-phosphate and beta-D-fructose 6-phosphate from D-ribose 5-phosphate and D-xylulose 5-phosphate (non-oxidative stage): step 2/3. In terms of biological role, transaldolase is important for the balance of metabolites in the pentose-phosphate pathway. The chain is Transaldolase from Marinobacter nauticus (strain ATCC 700491 / DSM 11845 / VT8) (Marinobacter aquaeolei).